The primary structure comprises 620 residues: 1-deoxy-D-xylulose-5-phosphate synthase (620 aa).

Residues histidine 80 and 121 to 123 each bind thiamine diphosphate; that span reads GHS. Mg(2+) is bound at residue aspartate 152. Thiamine diphosphate is bound by residues 153-154, asparagine 181, tyrosine 288, and glutamate 370; that span reads GA. Residue asparagine 181 participates in Mg(2+) binding.

Belongs to the transketolase family. DXPS subfamily. As to quaternary structure, homodimer. Requires Mg(2+) as cofactor. Thiamine diphosphate serves as cofactor.

It catalyses the reaction D-glyceraldehyde 3-phosphate + pyruvate + H(+) = 1-deoxy-D-xylulose 5-phosphate + CO2. It participates in metabolic intermediate biosynthesis; 1-deoxy-D-xylulose 5-phosphate biosynthesis; 1-deoxy-D-xylulose 5-phosphate from D-glyceraldehyde 3-phosphate and pyruvate: step 1/1. In terms of biological role, catalyzes the acyloin condensation reaction between C atoms 2 and 3 of pyruvate and glyceraldehyde 3-phosphate to yield 1-deoxy-D-xylulose-5-phosphate (DXP). The polypeptide is 1-deoxy-D-xylulose-5-phosphate synthase (Escherichia coli (strain K12 / MC4100 / BW2952)).